The primary structure comprises 262 residues: Hydroxyethylthiazole kinase (262 aa).

Met-50 is a substrate binding site. ATP is bound by residues Arg-125 and Thr-171. Gly-198 contributes to the substrate binding site.

It belongs to the Thz kinase family. It depends on Mg(2+) as a cofactor.

The enzyme catalyses 5-(2-hydroxyethyl)-4-methylthiazole + ATP = 4-methyl-5-(2-phosphooxyethyl)-thiazole + ADP + H(+). It participates in cofactor biosynthesis; thiamine diphosphate biosynthesis; 4-methyl-5-(2-phosphoethyl)-thiazole from 5-(2-hydroxyethyl)-4-methylthiazole: step 1/1. Functionally, catalyzes the phosphorylation of the hydroxyl group of 4-methyl-5-beta-hydroxyethylthiazole (THZ). This Escherichia coli (strain SMS-3-5 / SECEC) protein is Hydroxyethylthiazole kinase.